The sequence spans 464 residues: GDNF family receptor alpha-2 (464 aa).

The N-terminal stretch at 1–21 is a signal peptide; the sequence is MILANAFCLFFFLDETLRSLA. Intrachain disulfides connect Cys-40-Cys-93, Cys-47-Cys-53, Cys-63-Cys-78, Cys-95-Cys-105, Cys-161-Cys-222, Cys-168-Cys-174, Cys-185-Cys-200, Cys-195-Cys-241, Cys-224-Cys-229, Cys-251-Cys-323, Cys-258-Cys-264, Cys-275-Cys-293, Cys-285-Cys-347, and Cys-325-Cys-335. N-linked (GlcNAc...) asparagine glycosylation is present at Asn-52. N-linked (GlcNAc...) asparagine glycosylation occurs at Asn-357. Over residues 360–374 the composition is skewed to polar residues; that stretch reads DVNLSPKSPPFQATQ. Residues 360 to 392 form a disordered region; sequence DVNLSPKSPPFQATQAPRVDKTPSLPDDLSDST. A compositionally biased stretch (low complexity) spans 381–392; sequence TPSLPDDLSDST. Asn-413 is a glycosylation site (N-linked (GlcNAc...) asparagine). Asn-440 is lipidated: GPI-anchor amidated asparagine. A propeptide spans 441-464 (removed in mature form); sequence SGPRRTRPSAALTAASFLMLKLAL.

Belongs to the GDNFR family. Interacts with NRTN ligand and RET: forms a 2:2:2 ternary complex composed of NRTN ligand, GFRA2 and RET receptor. Also forms a 4:4:4 tetrameric complex composed of 4 copies of NRTN ligand, GFRA2 and RET receptor, which prevents endocytosis of RET. Interacts with SORL1.

It is found in the cell membrane. In terms of biological role, receptor for neurturin (NRTN), a growth factor that supports the survival of sympathetic neurons. NRTN-binding leads to autophosphorylation and activation of the RET receptor. Also able to mediate GDNF signaling through the RET tyrosine kinase receptor. This Bos taurus (Bovine) protein is GDNF family receptor alpha-2 (GFRA2).